A 116-amino-acid polypeptide reads, in one-letter code: Putative UPF0320 protein YLL065W (116 aa).

It belongs to the UPF0320 family.

This Saccharomyces cerevisiae (strain ATCC 204508 / S288c) (Baker's yeast) protein is Putative UPF0320 protein YLL065W.